The chain runs to 514 residues: Flagellin B (514 aa).

The protein belongs to the bacterial flagellin family. In terms of assembly, heteromer of FlaA and FlaB. FlaB is located proximal to the hook while the remainder of the filament is composed of the predominant FlaA.

Its subcellular location is the secreted. It localises to the bacterial flagellum. In terms of biological role, flagellin is the subunit protein which polymerizes to form the filaments of bacterial flagella. Important for motility and virulence. The protein is Flagellin B (flaB) of Helicobacter pylori (strain ATCC 700392 / 26695) (Campylobacter pylori).